A 325-amino-acid chain; its full sequence is Inner membrane protein YrbG (325 aa).

Residues 1-5 are Periplasmic-facing; sequence MLLAT. A helical membrane pass occupies residues 6–26; sequence ALLIVGLLLVVYSADRLVFAA. The Cytoplasmic portion of the chain corresponds to 27–37; that stretch reads SILCRTFGIPP. A helical transmembrane segment spans residues 38 to 58; the sequence is LIIGMTVVSIGTSLPEVIVSL. Over 59–67 the chain is Periplasmic; that stretch reads AASLHEQRD. Residues 68–88 form a helical membrane-spanning segment; sequence LAVGTALGSNIINILLILGLA. The Cytoplasmic segment spans residues 89-104; sequence ALVRPFTVHSDVLRRE. Residues 105–125 traverse the membrane as a helical segment; sequence LPLMLLVSVVAGSVLYDGQLS. Position 126 (Arg-126) is a topological domain, periplasmic. A helical transmembrane segment spans residues 127–147; sequence SDGIFLLFLAVLWLLFIVKLA. The Cytoplasmic segment spans residues 148–169; sequence RQAERQGTDSLTREQLAELPRD. Residues 170 to 190 form a helical membrane-spanning segment; that stretch reads GGLPVAFLWLGIALIIMPVAT. At 191 to 198 the chain is on the periplasmic side; the sequence is RMVVDNAT. The helical transmembrane segment at 199–219 threads the bilayer; that stretch reads VLANYFAISELTMGLTAIAIG. At 220-243 the chain is on the cytoplasmic side; that stretch reads TSLPELATAIAGVRKGENDIAVGN. Residues 244–264 traverse the membrane as a helical segment; the sequence is IIGANIFNIVIVLGLPALITP. Topologically, residues 265–269 are periplasmic; it reads GEIDP. Residues 270–290 traverse the membrane as a helical segment; it reads LAYSRDYSVMLLVSIIFALLC. Residues 291-302 lie on the Cytoplasmic side of the membrane; it reads WRRSPQPGRGVG. The helical transmembrane segment at 303 to 323 threads the bilayer; sequence VLLTGGFIVWLAMLYWLSPIL. Residues 324–325 are Periplasmic-facing; sequence VE.

The protein belongs to the Ca(2+):cation antiporter (CaCA) (TC 2.A.19) family.

It is found in the cell inner membrane. The polypeptide is Inner membrane protein YrbG (yrbG) (Escherichia coli (strain K12)).